A 121-amino-acid chain; its full sequence is Ribonuclease P protein component (121 aa).

Belongs to the RnpA family. In terms of assembly, consists of a catalytic RNA component (M1 or rnpB) and a protein subunit.

The catalysed reaction is Endonucleolytic cleavage of RNA, removing 5'-extranucleotides from tRNA precursor.. Its function is as follows. RNaseP catalyzes the removal of the 5'-leader sequence from pre-tRNA to produce the mature 5'-terminus. It can also cleave other RNA substrates such as 4.5S RNA. The protein component plays an auxiliary but essential role in vivo by binding to the 5'-leader sequence and broadening the substrate specificity of the ribozyme. This chain is Ribonuclease P protein component, found in Lactobacillus delbrueckii subsp. bulgaricus (strain ATCC 11842 / DSM 20081 / BCRC 10696 / JCM 1002 / NBRC 13953 / NCIMB 11778 / NCTC 12712 / WDCM 00102 / Lb 14).